A 265-amino-acid polypeptide reads, in one-letter code: 3-methyl-2-oxobutanoate hydroxymethyltransferase (265 aa).

Residues D44 and D83 each contribute to the Mg(2+) site. 3-methyl-2-oxobutanoate-binding positions include 44-45 (DS), D83, and K113. E115 contributes to the Mg(2+) binding site. E182 (proton acceptor) is an active-site residue.

Belongs to the PanB family. In terms of assembly, homodecamer; pentamer of dimers. Mg(2+) serves as cofactor.

It localises to the cytoplasm. The catalysed reaction is 3-methyl-2-oxobutanoate + (6R)-5,10-methylene-5,6,7,8-tetrahydrofolate + H2O = 2-dehydropantoate + (6S)-5,6,7,8-tetrahydrofolate. It functions in the pathway cofactor biosynthesis; (R)-pantothenate biosynthesis; (R)-pantoate from 3-methyl-2-oxobutanoate: step 1/2. In terms of biological role, catalyzes the reversible reaction in which hydroxymethyl group from 5,10-methylenetetrahydrofolate is transferred onto alpha-ketoisovalerate to form ketopantoate. The protein is 3-methyl-2-oxobutanoate hydroxymethyltransferase of Aquifex aeolicus (strain VF5).